The following is a 447-amino-acid chain: Tubulin beta-5 chain (447 aa).

GTP is bound by residues Gln11, Glu69, Ser138, Gly142, Thr143, Gly144, Asn204, and Asn226. Glu69 serves as a coordination point for Mg(2+). Residues 421–447 (EYQQYQDATADDEEEDYGDEEEDEVAA) form a disordered region. The segment covering 429–447 (TADDEEEDYGDEEEDEVAA) has biased composition (acidic residues).

Belongs to the tubulin family. Dimer of alpha and beta chains. A typical microtubule is a hollow water-filled tube with an outer diameter of 25 nm and an inner diameter of 15 nM. Alpha-beta heterodimers associate head-to-tail to form protofilaments running lengthwise along the microtubule wall with the beta-tubulin subunit facing the microtubule plus end conferring a structural polarity. Microtubules usually have 13 protofilaments but different protofilament numbers can be found in some organisms and specialized cells. Mg(2+) serves as cofactor. In terms of tissue distribution, expressed in roots, leaf sheaths, and suspension cultured cells.

It localises to the cytoplasm. Its subcellular location is the cytoskeleton. Tubulin is the major constituent of microtubules, a cylinder consisting of laterally associated linear protofilaments composed of alpha- and beta-tubulin heterodimers. Microtubules grow by the addition of GTP-tubulin dimers to the microtubule end, where a stabilizing cap forms. Below the cap, tubulin dimers are in GDP-bound state, owing to GTPase activity of alpha-tubulin. This is Tubulin beta-5 chain (TUBB5) from Oryza sativa subsp. japonica (Rice).